A 179-amino-acid polypeptide reads, in one-letter code: Large ribosomal subunit protein uL5 (179 aa).

It belongs to the universal ribosomal protein uL5 family. Part of the 50S ribosomal subunit; part of the 5S rRNA/L5/L18/L25 subcomplex. Contacts the 5S rRNA and the P site tRNA. Forms a bridge to the 30S subunit in the 70S ribosome.

This is one of the proteins that bind and probably mediate the attachment of the 5S RNA into the large ribosomal subunit, where it forms part of the central protuberance. In the 70S ribosome it contacts protein S13 of the 30S subunit (bridge B1b), connecting the 2 subunits; this bridge is implicated in subunit movement. Contacts the P site tRNA; the 5S rRNA and some of its associated proteins might help stabilize positioning of ribosome-bound tRNAs. This is Large ribosomal subunit protein uL5 from Shewanella frigidimarina (strain NCIMB 400).